Reading from the N-terminus, the 270-residue chain is Formamidopyrimidine-DNA glycosylase (270 aa).

Residue Pro-2 is the Schiff-base intermediate with DNA of the active site. Glu-3 acts as the Proton donor in catalysis. Lys-57 serves as the catalytic Proton donor; for beta-elimination activity. Residues His-90, Arg-109, and Lys-150 each contribute to the DNA site. The FPG-type zinc finger occupies 235–269; that stretch reads LVYGNKDKPCPRCGTKIKSIIIGQRNSFFCPQCQK. Arg-259 acts as the Proton donor; for delta-elimination activity in catalysis.

This sequence belongs to the FPG family. Monomer. Requires Zn(2+) as cofactor.

It carries out the reaction Hydrolysis of DNA containing ring-opened 7-methylguanine residues, releasing 2,6-diamino-4-hydroxy-5-(N-methyl)formamidopyrimidine.. The enzyme catalyses 2'-deoxyribonucleotide-(2'-deoxyribose 5'-phosphate)-2'-deoxyribonucleotide-DNA = a 3'-end 2'-deoxyribonucleotide-(2,3-dehydro-2,3-deoxyribose 5'-phosphate)-DNA + a 5'-end 5'-phospho-2'-deoxyribonucleoside-DNA + H(+). Involved in base excision repair of DNA damaged by oxidation or by mutagenic agents. Acts as a DNA glycosylase that recognizes and removes damaged bases. Has a preference for oxidized purines, such as 7,8-dihydro-8-oxoguanine (8-oxoG). Has AP (apurinic/apyrimidinic) lyase activity and introduces nicks in the DNA strand. Cleaves the DNA backbone by beta-delta elimination to generate a single-strand break at the site of the removed base with both 3'- and 5'-phosphates. The protein is Formamidopyrimidine-DNA glycosylase of Histophilus somni (strain 2336) (Haemophilus somnus).